We begin with the raw amino-acid sequence, 412 residues long: Transforming growth factor beta-3 proprotein (412 aa).

The N-terminal stretch at 1-23 (MKMHLQRALVVLALLNFATVSLS) is a signal peptide. N-linked (GlcNAc...) asparagine glycans are attached at residues N74, N135, and N142. Positions 261 to 263 (RGD) match the Cell attachment site motif. Q293 carries the post-translational modification N5-methylglutamine. Intrachain disulfides connect C307/C316, C315/C378, C344/C409, and C348/C411.

The protein belongs to the TGF-beta family. Interacts with ASPN. Latency-associated peptide: Homodimer; disulfide-linked. Latency-associated peptide: Interacts with Transforming growth factor beta-3 (TGF-beta-3) chain; interaction is non-covalent and maintains (TGF-beta-3) in a latent state. Latency-associated peptide: Interacts with LRRC32/GARP; leading to regulate activation of TGF-beta-3 and promote epithelial fusion during palate development. Latency-associated peptide: Interacts (via cell attachment site) with integrins, leading to release of the active TGF-beta-3. Transforming growth factor beta-3: Homodimer; disulfide-linked. Transforming growth factor beta-3: Interacts with TGF-beta receptors (TGFBR1 and TGFBR2), leading to signal transduction. In terms of processing, transforming growth factor beta-3 proprotein: The precursor proprotein is cleaved in the Golgi apparatus to form Transforming growth factor beta-3 (TGF-beta-3) and Latency-associated peptide (LAP) chains, which remain non-covalently linked, rendering TGF-beta-3 inactive. Post-translationally, methylated at Gln-293 by N6AMT1.

It localises to the secreted. The protein resides in the extracellular space. The protein localises to the extracellular matrix. Transforming growth factor beta-3 proprotein: Precursor of the Latency-associated peptide (LAP) and Transforming growth factor beta-3 (TGF-beta-3) chains, which constitute the regulatory and active subunit of TGF-beta-3, respectively. In terms of biological role, required to maintain the Transforming growth factor beta-3 (TGF-beta-3) chain in a latent state during storage in extracellular matrix. Associates non-covalently with TGF-beta-3 and regulates its activation via interaction with 'milieu molecules', such as LTBP1 and LRRC32/GARP, that control activation of TGF-beta-3. Interaction with integrins results in distortion of the Latency-associated peptide chain and subsequent release of the active TGF-beta-3. Functionally, transforming growth factor beta-3: Multifunctional protein that regulates embryogenesis and cell differentiation and is required in various processes such as secondary palate development. Activation into mature form follows different steps: following cleavage of the proprotein in the Golgi apparatus, Latency-associated peptide (LAP) and Transforming growth factor beta-3 (TGF-beta-3) chains remain non-covalently linked rendering TGF-beta-3 inactive during storage in extracellular matrix. At the same time, LAP chain interacts with 'milieu molecules', such as LTBP1 and LRRC32/GARP that control activation of TGF-beta-3 and maintain it in a latent state during storage in extracellular milieus. TGF-beta-3 is released from LAP by integrins: integrin-binding results in distortion of the LAP chain and subsequent release of the active TGF-beta-3. Once activated following release of LAP, TGF-beta-3 acts by binding to TGF-beta receptors (TGFBR1 and TGFBR2), which transduce signal. This is Transforming growth factor beta-3 proprotein (TGFB3) from Homo sapiens (Human).